The primary structure comprises 335 residues: tRNA N6-adenosine threonylcarbamoyltransferase (335 aa).

Residues His109, His113, and Tyr130 each contribute to the a divalent metal cation site. Residues Tyr130–Gly134, Asp162, Gly177, Glu181, and Asn266 contribute to the substrate site. An a divalent metal cation-binding site is contributed by Asp294.

It belongs to the KAE1 / TsaD family. In terms of assembly, component of the EKC/KEOPS complex composed of at least GON7, TP53RK, TPRKB, OSGEP and LAGE3; the whole complex dimerizes. Interacts with PRAME. Requires a divalent metal cation as cofactor. In terms of tissue distribution, widely expressed at low level. Expressed in heart, placenta, liver, kidney, lung, brain, skeletal muscle and pancreas.

The protein resides in the cytoplasm. It localises to the nucleus. The enzyme catalyses L-threonylcarbamoyladenylate + adenosine(37) in tRNA = N(6)-L-threonylcarbamoyladenosine(37) in tRNA + AMP + H(+). In terms of biological role, component of the EKC/KEOPS complex that is required for the formation of a threonylcarbamoyl group on adenosine at position 37 (t(6)A37) in tRNAs that read codons beginning with adenine. The complex is probably involved in the transfer of the threonylcarbamoyl moiety of threonylcarbamoyl-AMP (TC-AMP) to the N6 group of A37. OSGEP likely plays a direct catalytic role in this reaction, but requires other protein(s) of the complex to fulfill this activity. The sequence is that of tRNA N6-adenosine threonylcarbamoyltransferase from Homo sapiens (Human).